The following is a 554-amino-acid chain: Phenylalanine--tRNA ligase beta subunit (554 aa).

A B5 domain is found at Leu-276–Gly-351. 4 residues coordinate Mg(2+): Asp-329, Asp-335, Glu-338, and Glu-339.

It belongs to the phenylalanyl-tRNA synthetase beta subunit family. Type 2 subfamily. In terms of assembly, tetramer of two alpha and two beta subunits. It depends on Mg(2+) as a cofactor.

It localises to the cytoplasm. It catalyses the reaction tRNA(Phe) + L-phenylalanine + ATP = L-phenylalanyl-tRNA(Phe) + AMP + diphosphate + H(+). The chain is Phenylalanine--tRNA ligase beta subunit from Methanococcus maripaludis (strain DSM 14266 / JCM 13030 / NBRC 101832 / S2 / LL).